The chain runs to 430 residues: Asparagine--tRNA ligase (430 aa).

It belongs to the class-II aminoacyl-tRNA synthetase family. In terms of assembly, homodimer.

It is found in the cytoplasm. The enzyme catalyses tRNA(Asn) + L-asparagine + ATP = L-asparaginyl-tRNA(Asn) + AMP + diphosphate + H(+). The sequence is that of Asparagine--tRNA ligase from Oceanobacillus iheyensis (strain DSM 14371 / CIP 107618 / JCM 11309 / KCTC 3954 / HTE831).